Here is a 358-residue protein sequence, read N- to C-terminus: UDP-N-acetylglucosamine--N-acetylmuramyl-(pentapeptide) pyrophosphoryl-undecaprenol N-acetylglucosamine transferase (358 aa).

UDP-N-acetyl-alpha-D-glucosamine contacts are provided by residues 10 to 12, asparagine 124, arginine 165, serine 187, isoleucine 243, and glutamine 288; that span reads TGG.

The protein belongs to the glycosyltransferase 28 family. MurG subfamily.

It localises to the cell inner membrane. The enzyme catalyses di-trans,octa-cis-undecaprenyl diphospho-N-acetyl-alpha-D-muramoyl-L-alanyl-D-glutamyl-meso-2,6-diaminopimeloyl-D-alanyl-D-alanine + UDP-N-acetyl-alpha-D-glucosamine = di-trans,octa-cis-undecaprenyl diphospho-[N-acetyl-alpha-D-glucosaminyl-(1-&gt;4)]-N-acetyl-alpha-D-muramoyl-L-alanyl-D-glutamyl-meso-2,6-diaminopimeloyl-D-alanyl-D-alanine + UDP + H(+). The protein operates within cell wall biogenesis; peptidoglycan biosynthesis. Its function is as follows. Cell wall formation. Catalyzes the transfer of a GlcNAc subunit on undecaprenyl-pyrophosphoryl-MurNAc-pentapeptide (lipid intermediate I) to form undecaprenyl-pyrophosphoryl-MurNAc-(pentapeptide)GlcNAc (lipid intermediate II). This chain is UDP-N-acetylglucosamine--N-acetylmuramyl-(pentapeptide) pyrophosphoryl-undecaprenol N-acetylglucosamine transferase, found in Syntrophotalea carbinolica (strain DSM 2380 / NBRC 103641 / GraBd1) (Pelobacter carbinolicus).